Reading from the N-terminus, the 457-residue chain is MTLLQFAGLLLVWLVCGGFILTLTWREFRRVRFNFNVFFSMLFLLTFFFGFPLTCILVFGFDVEVVPAEYLLQALLSAGCFYAIYYVTYKTRLRTRHRAPSRPAFTINRIEAHLSWMIMALVALITVSVFFLHNGFLLFKLQKYSQIFSADVSGVALKRFFYFFIPAMLVVYFLQQNMRSWLLFLVGTVAFGLLTYAIVGGTRANIIIAFALFLFIGIIRGWITLWMLALAGVGAIVAMFWLALKRYNLDVSGSQAFYTFLYLTRDTFSPWENLGLLLQNYDRIDFQGLAPVWRDFYVFIPSWLWHERPSVVLNSANYFTWEVLDNHSGLAISPTLIGSLVVMGGALFIMLGAVMVGLIIKWFDWLYEKGRQEENPYKAAILQSFCFGAVFNMIVLAREGLDAFVSRVVFFCVIFAACVLVAKLLYWLLDSAGLVRARKGPACARSSLKHCFVGNDS.

11 consecutive transmembrane segments (helical) span residues 3-23, 41-61, 65-85, 118-138, 154-174, 181-201, 206-226, 227-247, 340-360, 377-397, and 408-428; these read LLQF…ILTL, MLFL…VFGF, VVPA…YAIY, IMAL…GFLL, GVAL…VYFL, WLLF…IVGG, IIIA…ITLW, MLAL…LKRY, LVVM…GLII, YKAA…IVLA, and VVFF…LYWL.

It belongs to the WzyE family. Probably part of a complex composed of WzxE, WzyE and WzzE.

It is found in the cell inner membrane. Its pathway is bacterial outer membrane biogenesis; enterobacterial common antigen biosynthesis. Probably involved in the polymerization of enterobacterial common antigen (ECA) trisaccharide repeat units. The sequence is that of Probable ECA polymerase from Erwinia tasmaniensis (strain DSM 17950 / CFBP 7177 / CIP 109463 / NCPPB 4357 / Et1/99).